Here is an 886-residue protein sequence, read N- to C-terminus: Pyruvate dehydrogenase E1 component (886 aa).

In terms of assembly, homodimer. Part of the PDH complex, consisting of multiple copies of pyruvate dehydrogenase (E1), dihydrolipoamide acetyltransferase (E2) and lipoamide dehydrogenase (E3). Requires thiamine diphosphate as cofactor.

The enzyme catalyses N(6)-[(R)-lipoyl]-L-lysyl-[protein] + pyruvate + H(+) = N(6)-[(R)-S(8)-acetyldihydrolipoyl]-L-lysyl-[protein] + CO2. Component of the pyruvate dehydrogenase (PDH) complex, that catalyzes the overall conversion of pyruvate to acetyl-CoA and CO(2). This is Pyruvate dehydrogenase E1 component (aceE) from Haemophilus influenzae (strain ATCC 51907 / DSM 11121 / KW20 / Rd).